The chain runs to 356 residues: Cyclin-A1-4 (356 aa).

Belongs to the cyclin family. Cyclin AB subfamily.

This is Cyclin-A1-4 (CYCA1-4) from Oryza sativa subsp. japonica (Rice).